The sequence spans 174 residues: Scytalone dehydratase-like protein Arp1 (174 aa).

Tyr-49 is a binding site for substrate. Active-site residues include His-84 and His-109. A substrate-binding site is contributed by Asn-130.

The protein belongs to the scytalone dehydratase family. As to quaternary structure, homotrimer. Each subunit contains an active site, located in the central part of the hydrophobic core of the monomer, which functions independently.

Scytalone dehydratase-like protein; part of the Pks2 gene cluster that mediates the formation of infectious structures (appressoria), enabling these fungi to kill insects faster. The product of the Pks2 gene cluster is different from the one of Pks1 and has still not been identified. This chain is Scytalone dehydratase-like protein Arp1, found in Metarhizium majus (strain ARSEF 297).